The chain runs to 160 residues: Ureidoglycolate lyase (160 aa).

Belongs to the ureidoglycolate lyase family. In terms of assembly, homodimer. Ni(2+) is required as a cofactor.

It carries out the reaction (S)-ureidoglycolate = urea + glyoxylate. It participates in nitrogen metabolism; (S)-allantoin degradation. In terms of biological role, catalyzes the catabolism of the allantoin degradation intermediate (S)-ureidoglycolate, generating urea and glyoxylate. Involved in the anaerobic utilization of allantoin as sole nitrogen source. Reinforces the induction of genes involved in the degradation of allantoin and glyoxylate by producing glyoxylate. The protein is Ureidoglycolate lyase of Escherichia coli (strain SMS-3-5 / SECEC).